The sequence spans 76 residues: Protein A9 homolog (76 aa).

Positions 1-21 are cleaved as a signal peptide; that stretch reads MSCYSSILNSISTLAFLQVAS. Residues 23–45 lie on the Intravirion side of the membrane; the sequence is VIELVRHCIMHFCETRIRCNTLA. Residues 46–66 traverse the membrane as a helical segment; the sequence is FVILKILITMVIYFMIGLGLF. At 67 to 76 the chain is on the virion surface side; that stretch reads YLAKNGTEAE. A glycan (N-linked (GlcNAc...) asparagine; by host) is linked at N71.

This sequence belongs to the chordopoxvirinae A9 family.

It localises to the virion membrane. The protein resides in the host cytoplasm. Envelope protein. Required for an early step in virion morphogenesis. The protein is Protein A9 homolog of Fowlpox virus (strain NVSL) (FPV).